Consider the following 254-residue polypeptide: Large ribosomal subunit protein uL4 (254 aa).

A disordered region spans residues 45–70; sequence PWGNDPEAGKRTSAKGWGSGRGTARV.

The protein belongs to the universal ribosomal protein uL4 family. In terms of assembly, part of the 50S ribosomal subunit.

One of the primary rRNA binding proteins, this protein initially binds near the 5'-end of the 23S rRNA. It is important during the early stages of 50S assembly. It makes multiple contacts with different domains of the 23S rRNA in the assembled 50S subunit and ribosome. In terms of biological role, forms part of the polypeptide exit tunnel. The sequence is that of Large ribosomal subunit protein uL4 from Methanobrevibacter smithii (strain ATCC 35061 / DSM 861 / OCM 144 / PS).